Consider the following 272-residue polypeptide: NH(3)-dependent NAD(+) synthetase (272 aa).

45–52 (GISGGQDS) is a binding site for ATP. Position 51 (D51) interacts with Mg(2+). R138 serves as a coordination point for deamido-NAD(+). Position 158 (T158) interacts with ATP. Position 163 (E163) interacts with Mg(2+). K171 and D178 together coordinate deamido-NAD(+). K187 and T209 together coordinate ATP. Residue 258 to 259 (HK) coordinates deamido-NAD(+).

This sequence belongs to the NAD synthetase family. Homodimer.

It catalyses the reaction deamido-NAD(+) + NH4(+) + ATP = AMP + diphosphate + NAD(+) + H(+). Its pathway is cofactor biosynthesis; NAD(+) biosynthesis; NAD(+) from deamido-NAD(+) (ammonia route): step 1/1. In terms of biological role, catalyzes the ATP-dependent amidation of deamido-NAD to form NAD. Uses ammonia as a nitrogen source. The polypeptide is NH(3)-dependent NAD(+) synthetase (Bacillus cereus (strain ATCC 14579 / DSM 31 / CCUG 7414 / JCM 2152 / NBRC 15305 / NCIMB 9373 / NCTC 2599 / NRRL B-3711)).